The sequence spans 189 residues: Elongation factor P (189 aa).

K34 carries the post-translational modification N6-(3,6-diaminohexanoyl)-5-hydroxylysine.

The protein belongs to the elongation factor P family. Post-translationally, may be beta-lysylated on the epsilon-amino group of Lys-34 by the combined action of EpmA and EpmB, and then hydroxylated on the C5 position of the same residue by EpmC (if this protein is present). Lysylation is critical for the stimulatory effect of EF-P on peptide-bond formation. The lysylation moiety may extend toward the peptidyltransferase center and stabilize the terminal 3-CCA end of the tRNA. Hydroxylation of the C5 position on Lys-34 may allow additional potential stabilizing hydrogen-bond interactions with the P-tRNA.

The protein localises to the cytoplasm. It participates in protein biosynthesis; polypeptide chain elongation. Functionally, involved in peptide bond synthesis. Alleviates ribosome stalling that occurs when 3 or more consecutive Pro residues or the sequence PPG is present in a protein, possibly by augmenting the peptidyl transferase activity of the ribosome. Modification of Lys-34 is required for alleviation. This Francisella tularensis subsp. novicida (strain U112) protein is Elongation factor P.